A 331-amino-acid chain; its full sequence is Sulfate/thiosulfate import ATP-binding protein CysA (331 aa).

An ABC transporter domain is found at 2-232; it reads ITVTNARKNY…PANEFVMSFL (231 aa). 34 to 41 provides a ligand contact to ATP; that stretch reads GPSGSGKS.

Belongs to the ABC transporter superfamily. Sulfate/tungstate importer (TC 3.A.1.6) family. As to quaternary structure, the complex is composed of two ATP-binding proteins (CysA), two transmembrane proteins (CysT and CysW) and a solute-binding protein (CysP).

The protein resides in the cell membrane. The catalysed reaction is sulfate(out) + ATP + H2O = sulfate(in) + ADP + phosphate + H(+). The enzyme catalyses thiosulfate(out) + ATP + H2O = thiosulfate(in) + ADP + phosphate + H(+). Functionally, part of the ABC transporter complex CysAWTP involved in sulfate/thiosulfate import. Responsible for energy coupling to the transport system. This Nocardia farcinica (strain IFM 10152) protein is Sulfate/thiosulfate import ATP-binding protein CysA.